Reading from the N-terminus, the 318-residue chain is Large ribosomal subunit protein uL10 (318 aa).

Y24 is modified (phosphotyrosine). Residue T59 is modified to Phosphothreonine. A Glycyl lysine isopeptide (Lys-Gly) (interchain with G-Cter in ubiquitin) cross-link involves residue K264. K298 participates in a covalent cross-link: Glycyl lysine isopeptide (Lys-Gly) (interchain with G-Cter in SUMO1); alternate. K298 is covalently cross-linked (Glycyl lysine isopeptide (Lys-Gly) (interchain with G-Cter in SUMO2); alternate). The tract at residues 298–318 (KVEAKEESEESDEDMGFGLFD) is disordered. Residues 303 to 312 (EESEESDEDM) are compositionally biased toward acidic residues. 2 positions are modified to phosphoserine: S305 and S308.

It belongs to the universal ribosomal protein uL10 family. As to quaternary structure, P0 forms a pentameric complex by interaction with dimers of P1 and P2. Identified in a IGF2BP1-dependent mRNP granule complex containing untranslated mRNAs. Interacts with APEX1. Interacts with FMR1. Ubiquitinated at Lys-264 by RNF14 and RNF25 in response to ribosome collisions (ribosome stalling).

The protein resides in the nucleus. Its subcellular location is the cytoplasm. Its function is as follows. Ribosomal protein P0 is the functional equivalent of E.coli protein L10. This chain is Large ribosomal subunit protein uL10 (RPLP0), found in Sus scrofa (Pig).